Reading from the N-terminus, the 229-residue chain is Large ribosomal subunit protein uL1 (229 aa).

It belongs to the universal ribosomal protein uL1 family. In terms of assembly, part of the 50S ribosomal subunit.

Its function is as follows. Binds directly to 23S rRNA. The L1 stalk is quite mobile in the ribosome, and is involved in E site tRNA release. In terms of biological role, protein L1 is also a translational repressor protein, it controls the translation of the L11 operon by binding to its mRNA. This chain is Large ribosomal subunit protein uL1, found in Clostridium perfringens (strain ATCC 13124 / DSM 756 / JCM 1290 / NCIMB 6125 / NCTC 8237 / Type A).